Consider the following 95-residue polypeptide: MLFTSVLDLPTSTRALPYNGKRIYLKFYNKSIKMRNSPTTADAIAWTAVKRKYYCDRGEWLPFADANDYDTTTTEEEDSSTTTTTDNETNSDDDI.

Positions 65–95 are disordered; that stretch reads DANDYDTTTTEEEDSSTTTTTDNETNSDDDI.

This is an uncharacterized protein from Lymantria dispar multicapsid nuclear polyhedrosis virus (LdMNPV).